The sequence spans 352 residues: Very-long-chain 3-oxoacyl-CoA reductase (352 aa).

The helical transmembrane segment at 20–40 (TLWFIFIFGLLKLVPFALRFL) threads the bilayer. NADP(+)-binding residues include Val66, Asp120, Asn147, Tyr228, Lys232, Val261, and Ser263. Tyr228 acts as the Proton donor in catalysis. Residue Lys232 is the Lowers pKa of active site Tyr of the active site.

It belongs to the short-chain dehydrogenases/reductases (SDR) family.

The protein localises to the endoplasmic reticulum membrane. The catalysed reaction is a very-long-chain (3R)-3-hydroxyacyl-CoA + NADP(+) = a very-long-chain 3-oxoacyl-CoA + NADPH + H(+). It functions in the pathway lipid metabolism; fatty acid biosynthesis. Functionally, component of the microsomal membrane bound fatty acid elongation system, which produces the 26-carbon very long-chain fatty acids (VLCFA) from palmitate. Catalyzes the reduction of the 3-ketoacyl-CoA intermediate that is formed in each cycle of fatty acid elongation. VLCFAs serve as precursors for ceramide and sphingolipids. The protein is Very-long-chain 3-oxoacyl-CoA reductase of Candida glabrata (strain ATCC 2001 / BCRC 20586 / JCM 3761 / NBRC 0622 / NRRL Y-65 / CBS 138) (Yeast).